The sequence spans 1317 residues: Clustered mitochondria protein homolog (1317 aa).

The Clu domain maps to 382-626 (DITRSQESYL…RVTPLDVTWQ (245 aa)). Positions 669-689 (KAQEEAANKEQSSEVTESKEQ) are enriched in basic and acidic residues. Disordered stretches follow at residues 669–700 (KAQE…EALD) and 939–966 (ANGV…PSRA). TPR repeat units follow at residues 1040-1073 (AKLY…TERT), 1082-1115 (ILAY…WKII), and 1124-1157 (ITTM…CESL). Disordered stretches follow at residues 1252–1273 (VQPQ…ANAS) and 1288–1317 (GGDA…KSSA).

It belongs to the CLU family. As to quaternary structure, may associate with the eukaryotic translation initiation factor 3 (eIF-3) complex.

It is found in the cytoplasm. Functionally, mRNA-binding protein involved in proper cytoplasmic distribution of mitochondria. The sequence is that of Clustered mitochondria protein homolog from Neosartorya fischeri (strain ATCC 1020 / DSM 3700 / CBS 544.65 / FGSC A1164 / JCM 1740 / NRRL 181 / WB 181) (Aspergillus fischerianus).